The sequence spans 33 residues: Cysteine-rich venom protein tripurin (33 aa).

It belongs to the CRISP family. In terms of processing, contains 8 disulfide bonds. In terms of tissue distribution, expressed by the venom gland.

Its subcellular location is the secreted. Its function is as follows. Blocks contraction of smooth muscle elicited by high potassium-induced depolarization, but does not block caffeine-stimulated contraction. May target voltage-gated calcium channels on smooth muscle. The sequence is that of Cysteine-rich venom protein tripurin from Trimeresurus purpureomaculatus (Mangrove pit viper).